The sequence spans 118 residues: Neutral phospholipase A2 homolog taipoxin beta chain 2 (118 aa).

Disulfide bonds link Cys-11–Cys-71, Cys-27–Cys-117, Cys-29–Cys-45, Cys-44–Cys-98, Cys-51–Cys-91, Cys-60–Cys-84, and Cys-78–Cys-89.

This sequence belongs to the phospholipase A2 family. Group I subfamily. D49 sub-subfamily. In terms of assembly, heterotrimer of alpha, beta, and gamma chains; non-covalently linked. Expressed by the venom gland.

It is found in the secreted. Heterotrimer: Snake venom phospholipase A2 (PLA2) heterotrimer that acts as a potent presynaptic neurotoxin by blocking synaptic transmission and synaptic vesicle recycling. May act by binding in a calcium-dependent fashion to neurotonal pentraxin-1 (NPTX1) and neurotonal pentraxin-2 (NPTX2), but not to neuronal pentraxin receptor (NPTXR). Also binds to taipoxin-associated calcium binding protein 49 (RCN2), a protein localized in the lumen of endoplasmic reticulum. Functionally, monomer (beta chain): Snake venom phospholipase A2 homolog that is neither toxic nor enzymatically active. Does not bind calcium. The sequence is that of Neutral phospholipase A2 homolog taipoxin beta chain 2 from Oxyuranus scutellatus scutellatus (Australian taipan).